Here is a 384-residue protein sequence, read N- to C-terminus: S-adenosylmethionine synthase (384 aa).

Residue histidine 15 coordinates ATP. Aspartate 17 provides a ligand contact to Mg(2+). Glutamate 43 contributes to the K(+) binding site. The L-methionine site is built by glutamate 56 and glutamine 99. A flexible loop region spans residues glutamine 99–arginine 109. Residues aspartate 164–lysine 166, arginine 231–phenylalanine 232, aspartate 240, arginine 246–lysine 247, alanine 263, and lysine 267 contribute to the ATP site. L-methionine is bound at residue aspartate 240. Lysine 271 contacts L-methionine.

Belongs to the AdoMet synthase family. As to quaternary structure, homotetramer; dimer of dimers. Mg(2+) serves as cofactor. The cofactor is K(+).

It is found in the cytoplasm. It catalyses the reaction L-methionine + ATP + H2O = S-adenosyl-L-methionine + phosphate + diphosphate. It participates in amino-acid biosynthesis; S-adenosyl-L-methionine biosynthesis; S-adenosyl-L-methionine from L-methionine: step 1/1. In terms of biological role, catalyzes the formation of S-adenosylmethionine (AdoMet) from methionine and ATP. The overall synthetic reaction is composed of two sequential steps, AdoMet formation and the subsequent tripolyphosphate hydrolysis which occurs prior to release of AdoMet from the enzyme. The protein is S-adenosylmethionine synthase of Shewanella pealeana (strain ATCC 700345 / ANG-SQ1).